The following is a 437-amino-acid chain: Ankyrin repeat domain-containing protein OPG015 (437 aa).

ANK repeat units follow at residues 117–146, 220–249, and 253–290; these read QDLLLYYLSNAYVEIDIVDLMVDHGAVIYK, GGRTLLYRAIYAGYIDLVSWLLENGANVNA, and NGYTCLDVAVDRGSVIARREAHLKILEILLREPLSIDC.

It belongs to the orthopoxvirus OPG015 family.

Its function is as follows. May be involved in virus-host protein interaction through the ankyrin repeats. This Monkeypox virus protein is Ankyrin repeat domain-containing protein OPG015 (OPG015).